Consider the following 136-residue polypeptide: Small ribosomal subunit protein uS11 (136 aa).

2 disordered regions span residues 1 to 20 and 115 to 136; these read MAQR…NVTN and VTPQ…EKAR. Over residues 125–136 the composition is skewed to basic residues; the sequence is PPKRVLKREKAR.

Belongs to the universal ribosomal protein uS11 family. In terms of assembly, part of the 30S ribosomal subunit. Interacts with proteins S7 and S18. Binds to IF-3.

In terms of biological role, located on the platform of the 30S subunit, it bridges several disparate RNA helices of the 16S rRNA. Forms part of the Shine-Dalgarno cleft in the 70S ribosome. The polypeptide is Small ribosomal subunit protein uS11 (Mycoplasmopsis pulmonis (strain UAB CTIP) (Mycoplasma pulmonis)).